A 183-amino-acid chain; its full sequence is ATP synthase subunit delta (183 aa).

This sequence belongs to the ATPase delta chain family. F-type ATPases have 2 components, F(1) - the catalytic core - and F(0) - the membrane proton channel. F(1) has five subunits: alpha(3), beta(3), gamma(1), delta(1), epsilon(1). F(0) has three main subunits: a(1), b(2) and c(10-14). The alpha and beta chains form an alternating ring which encloses part of the gamma chain. F(1) is attached to F(0) by a central stalk formed by the gamma and epsilon chains, while a peripheral stalk is formed by the delta and b chains.

It is found in the cell inner membrane. In terms of biological role, f(1)F(0) ATP synthase produces ATP from ADP in the presence of a proton or sodium gradient. F-type ATPases consist of two structural domains, F(1) containing the extramembraneous catalytic core and F(0) containing the membrane proton channel, linked together by a central stalk and a peripheral stalk. During catalysis, ATP synthesis in the catalytic domain of F(1) is coupled via a rotary mechanism of the central stalk subunits to proton translocation. This protein is part of the stalk that links CF(0) to CF(1). It either transmits conformational changes from CF(0) to CF(1) or is implicated in proton conduction. The protein is ATP synthase subunit delta of Maridesulfovibrio salexigens (strain ATCC 14822 / DSM 2638 / NCIMB 8403 / VKM B-1763) (Desulfovibrio salexigens).